Here is a 531-residue protein sequence, read N- to C-terminus: Na(+)/H(+) antiporter NhaB (531 aa).

A run of 11 helical transmembrane segments spans residues 23-45, 66-86, 97-117, 130-164, 206-226, 244-264, 307-327, 352-372, 393-413, 451-471, and 478-498; these read IAIL…VAGW, PGGL…SQVL, LLLI…LFVF, VSLM…FYSI, LLMH…VGEP, LRMG…CFLV, AFVG…VGLI, EEAL…GVII, LVIF…VFVG, ATPN…APLI, and MVWM…LAIE.

The protein belongs to the NhaB Na(+)/H(+) (TC 2.A.34) antiporter family.

It localises to the cell inner membrane. It catalyses the reaction 2 Na(+)(in) + 3 H(+)(out) = 2 Na(+)(out) + 3 H(+)(in). Its function is as follows. Na(+)/H(+) antiporter that extrudes sodium in exchange for external protons. The sequence is that of Na(+)/H(+) antiporter NhaB from Shewanella loihica (strain ATCC BAA-1088 / PV-4).